We begin with the raw amino-acid sequence, 276 residues long: S-adenosylmethionine decarboxylase proenzyme (276 aa).

Catalysis depends on serine 124, which acts as the Schiff-base intermediate with substrate; via pyruvic acid. Position 124 is a pyruvic acid (Ser); by autocatalysis (serine 124). The active-site Proton acceptor; for processing activity is histidine 129. Cysteine 152 (proton donor; for catalytic activity) is an active-site residue.

Belongs to the prokaryotic AdoMetDC family. Type 2 subfamily. As to quaternary structure, heterooctamer of four alpha and four beta chains arranged as a tetramer of alpha/beta heterodimers. The cofactor is pyruvate. In terms of processing, is synthesized initially as an inactive proenzyme. Formation of the active enzyme involves a self-maturation process in which the active site pyruvoyl group is generated from an internal serine residue via an autocatalytic post-translational modification. Two non-identical subunits are generated from the proenzyme in this reaction, and the pyruvate is formed at the N-terminus of the alpha chain, which is derived from the carboxyl end of the proenzyme. The post-translation cleavage follows an unusual pathway, termed non-hydrolytic serinolysis, in which the side chain hydroxyl group of the serine supplies its oxygen atom to form the C-terminus of the beta chain, while the remainder of the serine residue undergoes an oxidative deamination to produce ammonia and the pyruvoyl group blocking the N-terminus of the alpha chain.

It catalyses the reaction S-adenosyl-L-methionine + H(+) = S-adenosyl 3-(methylsulfanyl)propylamine + CO2. It participates in amine and polyamine biosynthesis; S-adenosylmethioninamine biosynthesis; S-adenosylmethioninamine from S-adenosyl-L-methionine: step 1/1. Its function is as follows. Catalyzes the decarboxylation of S-adenosylmethionine to S-adenosylmethioninamine (dcAdoMet), the propylamine donor required for the synthesis of the polyamines spermine and spermidine from the diamine putrescine. This is S-adenosylmethionine decarboxylase proenzyme from Desulfitobacterium hafniense (strain DSM 10664 / DCB-2).